The chain runs to 169 residues: Peptide deformylase 1 (169 aa).

Fe cation contacts are provided by C92 and H134. E135 is an active-site residue. Fe cation is bound at residue H138.

Belongs to the polypeptide deformylase family. Requires Fe(2+) as cofactor.

The enzyme catalyses N-terminal N-formyl-L-methionyl-[peptide] + H2O = N-terminal L-methionyl-[peptide] + formate. Functionally, removes the formyl group from the N-terminal Met of newly synthesized proteins. Requires at least a dipeptide for an efficient rate of reaction. N-terminal L-methionine is a prerequisite for activity but the enzyme has broad specificity at other positions. In Ralstonia nicotianae (strain ATCC BAA-1114 / GMI1000) (Ralstonia solanacearum), this protein is Peptide deformylase 1.